Reading from the N-terminus, the 434-residue chain is GTPase Obg (434 aa).

In terms of domain architecture, Obg spans 1–158 (MFLDTAKIKV…RELQLELKIL (158 aa)). In terms of domain architecture, OBG-type G spans 159–336 (ADVGLVGFPS…LLDATAELLD (178 aa)). Residues 165 to 172 (GFPSVGKS), 190 to 194 (FTTIV), 212 to 215 (DLPG), 282 to 285 (NKMD), and 317 to 319 (SGL) contribute to the GTP site. Mg(2+) contacts are provided by Ser-172 and Thr-192. The region spanning 356-434 (GFDEEEKAFE…IGKFEFEFVD (79 aa)) is the OCT domain.

This sequence belongs to the TRAFAC class OBG-HflX-like GTPase superfamily. OBG GTPase family. In terms of assembly, monomer. It depends on Mg(2+) as a cofactor.

It localises to the cytoplasm. In terms of biological role, an essential GTPase which binds GTP, GDP and possibly (p)ppGpp with moderate affinity, with high nucleotide exchange rates and a fairly low GTP hydrolysis rate. Plays a role in control of the cell cycle, stress response, ribosome biogenesis and in those bacteria that undergo differentiation, in morphogenesis control. In Streptococcus pneumoniae serotype 19F (strain G54), this protein is GTPase Obg.